We begin with the raw amino-acid sequence, 472 residues long: Argininosuccinate lyase (472 aa).

Belongs to the lyase 1 family. Argininosuccinate lyase subfamily.

Its subcellular location is the cytoplasm. It carries out the reaction 2-(N(omega)-L-arginino)succinate = fumarate + L-arginine. It participates in amino-acid biosynthesis; L-arginine biosynthesis; L-arginine from L-ornithine and carbamoyl phosphate: step 3/3. The protein is Argininosuccinate lyase of Rhodococcus opacus (strain B4).